The primary structure comprises 269 residues: Formamidopyrimidine-DNA glycosylase (269 aa).

The active-site Schiff-base intermediate with DNA is the Pro2. Glu3 functions as the Proton donor in the catalytic mechanism. Lys58 (proton donor; for beta-elimination activity) is an active-site residue. 3 residues coordinate DNA: His91, Arg110, and Lys150. An FPG-type zinc finger spans residues 235 to 269 (SVYGCENKTCHFCKSKIIKIVQNQRSTFYCRKCQT). Catalysis depends on Arg259, which acts as the Proton donor; for delta-elimination activity.

Belongs to the FPG family. Monomer. Zn(2+) serves as cofactor.

The catalysed reaction is Hydrolysis of DNA containing ring-opened 7-methylguanine residues, releasing 2,6-diamino-4-hydroxy-5-(N-methyl)formamidopyrimidine.. It carries out the reaction 2'-deoxyribonucleotide-(2'-deoxyribose 5'-phosphate)-2'-deoxyribonucleotide-DNA = a 3'-end 2'-deoxyribonucleotide-(2,3-dehydro-2,3-deoxyribose 5'-phosphate)-DNA + a 5'-end 5'-phospho-2'-deoxyribonucleoside-DNA + H(+). Its function is as follows. Involved in base excision repair of DNA damaged by oxidation or by mutagenic agents. Acts as a DNA glycosylase that recognizes and removes damaged bases. Has a preference for oxidized purines, such as 7,8-dihydro-8-oxoguanine (8-oxoG). Has AP (apurinic/apyrimidinic) lyase activity and introduces nicks in the DNA strand. Cleaves the DNA backbone by beta-delta elimination to generate a single-strand break at the site of the removed base with both 3'- and 5'-phosphates. This Ruthia magnifica subsp. Calyptogena magnifica protein is Formamidopyrimidine-DNA glycosylase.